The following is a 226-amino-acid chain: Ribosomal RNA small subunit methyltransferase G (226 aa).

Residues Gly-95, Leu-100, 146–147 (VE), and Arg-159 each bind S-adenosyl-L-methionine.

It belongs to the methyltransferase superfamily. RNA methyltransferase RsmG family.

The protein localises to the cytoplasm. The catalysed reaction is guanosine(527) in 16S rRNA + S-adenosyl-L-methionine = N(7)-methylguanosine(527) in 16S rRNA + S-adenosyl-L-homocysteine. Functionally, specifically methylates the N7 position of guanine in position 527 of 16S rRNA. This is Ribosomal RNA small subunit methyltransferase G from Acidovorax sp. (strain JS42).